We begin with the raw amino-acid sequence, 1272 residues long: Fused isobutyryl-CoA mutase (1272 aa).

The 139-residue stretch at 20 to 158 (RLRFVTAAAL…ARCAEGARAA (139 aa)) folds into the B12-binding domain. His-33 serves as a coordination point for adenosylcob(III)alamin. Residues 163–536 (ESQVGAWAAE…YRHVAEALRK (374 aa)) form a GTPase chaperone MeaI region. The segment at 193 to 240 (GAVARNPSSEASRVAAAGRGDHLDRGVRAASTADTADTANTANTANTA) is disordered. Over residues 221–240 (AASTADTADTANTANTANTA) the composition is skewed to low complexity. 334–339 (GAGKSS) lines the GTP pocket. Residues Ser-338, Ile-363, Asp-364, and Asp-377 each contribute to the Mg(2+) site. Arg-380 provides a ligand contact to GTP. Mg(2+) is bound by residues Glu-429 and Thr-430. 476 to 479 (NKFD) is a GTP binding site. The interval 537 to 758 (HGLRSGGGRL…MLDNLPGYFP (222 aa)) is linker. Low complexity-rich tracts occupy residues 614-631 (TVAT…KANA) and 639-663 (ANAS…ATPT). The disordered stretch occupies residues 614-667 (TVATSASPGASASSKANACTSTSSKANASPGANTTANSNASATSGTATPTDALN). Substrate is bound by residues Phe-766, Arg-801, Arg-907, Tyr-951, Ser-1000, Arg-1035, and Lys-1040. Positions 1152 and 1271 each coordinate GTP.

This sequence belongs to the IcmF family. As to quaternary structure, homodimer. Adenosylcob(III)alamin serves as cofactor. The cofactor is Mg(2+).

It carries out the reaction 2-methylpropanoyl-CoA = butanoyl-CoA. The catalysed reaction is GTP + H2O = GDP + phosphate + H(+). Catalyzes the reversible interconversion of isobutyryl-CoA and n-butyryl-CoA, using radical chemistry. Also exhibits GTPase activity, associated with its G-protein domain (MeaI) that functions as a chaperone that assists cofactor delivery and proper holo-enzyme assembly. Does not exhibit methylmalonyl-CoA mutase (MCM) activity. The sequence is that of Fused isobutyryl-CoA mutase from Paraburkholderia xenovorans (strain LB400).